The chain runs to 309 residues: tRNA pseudouridine synthase B (309 aa).

D51 (nucleophile) is an active-site residue.

It belongs to the pseudouridine synthase TruB family. Type 1 subfamily.

It carries out the reaction uridine(55) in tRNA = pseudouridine(55) in tRNA. Its function is as follows. Responsible for synthesis of pseudouridine from uracil-55 in the psi GC loop of transfer RNAs. The chain is tRNA pseudouridine synthase B from Coxiella burnetii (strain Dugway 5J108-111).